The sequence spans 289 residues: Ribonuclease H2 subunit A (289 aa).

The region spanning 20 to 249 (PFVMGIDEAG…TETAMRGACF (230 aa)) is the RNase H type-2 domain. Residues Asp-26, Glu-27, and Asp-134 each contribute to the a divalent metal cation site.

The protein belongs to the RNase HII family. Eukaryotic subfamily. It depends on Mn(2+) as a cofactor. Mg(2+) is required as a cofactor.

It catalyses the reaction Endonucleolytic cleavage to 5'-phosphomonoester.. Endonuclease that specifically degrades the RNA of RNA-DNA hybrids. Participates in DNA replication. This chain is Ribonuclease H2 subunit A (rnaseh2A), found in Dictyostelium discoideum (Social amoeba).